The primary structure comprises 623 residues: Low affinity potassium transport system protein Kup (623 aa).

12 helical membrane-spanning segments follow: residues 9–29 (LPAI…TSPL), 49–69 (VFGF…FKYL), 101–121 (VLVI…VITP), 137–157 (PSLD…LFMI), 163–183 (GMVG…LAVL), 212–232 (AVSF…EALY), 247–267 (WFSV…ALLL), 276–296 (PFFL…ATLA), 337–357 (IYIP…IVSF), 363–383 (LAAA…ILFA), 395–415 (ILVG…FSAN), and 419–439 (LFSG…IMTT).

The protein belongs to the HAK/KUP transporter (TC 2.A.72) family.

It is found in the cell inner membrane. The enzyme catalyses K(+)(in) + H(+)(in) = K(+)(out) + H(+)(out). Functionally, responsible for the low-affinity transport of potassium into the cell. Likely operates as a K(+):H(+) symporter. This is Low affinity potassium transport system protein Kup from Cronobacter sakazakii (strain ATCC BAA-894) (Enterobacter sakazakii).